Reading from the N-terminus, the 168-residue chain is Protein A40 (168 aa).

The Cytoplasmic portion of the chain corresponds to 1–9 (MNKPKTDYA). Residues 10 to 30 (GYACCVICGLIVGIIFTATLL) form a helical; Signal-anchor for type II membrane protein membrane-spanning segment. The Extracellular portion of the chain corresponds to 31-168 (KVVERKLVHT…TTFLSYHYFG (138 aa)). In terms of domain architecture, C-type lectin spans 63–168 (YNNKCIHLST…TTFLSYHYFG (106 aa)).

It belongs to the poxviridae A40 protein family.

It is found in the host membrane. The chain is Protein A40 from Homo sapiens (Human).